The primary structure comprises 279 residues: Urease accessory protein UreD (279 aa).

This sequence belongs to the UreD family. As to quaternary structure, ureD, UreF and UreG form a complex that acts as a GTP-hydrolysis-dependent molecular chaperone, activating the urease apoprotein by helping to assemble the nickel containing metallocenter of UreC. The UreE protein probably delivers the nickel.

The protein localises to the cytoplasm. Functionally, required for maturation of urease via the functional incorporation of the urease nickel metallocenter. In Pseudomonas fluorescens (strain Pf0-1), this protein is Urease accessory protein UreD.